We begin with the raw amino-acid sequence, 141 residues long: HTH-type transcriptional regulator MntR (141 aa).

The 63-residue stretch at Met1–Thr63 folds into the HTH dtxR-type domain. Residues Asp8, Glu11, His77, Glu99, Glu102, and His103 each contribute to the Mn(2+) site.

The protein belongs to the DtxR/MntR family. Homodimer.

The protein localises to the cytoplasm. DNA binding is strongly activated by Mn(2+). Its function is as follows. Central regulator of manganese homeostasis. The sequence is that of HTH-type transcriptional regulator MntR from Geobacillus kaustophilus (strain HTA426).